The sequence spans 503 residues: MASLFDINAAAAVKDYSIKPRLSYNTVNSITGPLVILDNIRRPQYNEIVNLNLPDGSVRSGQVLEVAGHKAIVQVFEGTSGVDVRKTTIDFTGHSMRIPVSEDMLGRVFNGSGLPIDKGPNLLAEDYLDINGSPINPYARIYPEEMIQTGISSIDGLNSIARGQKIPIFSAAGLPHNEIAAQICRQAGLVKRPTKDVHDGHEDNFSIVFAAMGVNLETARFFQRDFEENGSFERVTLFLNLANDPTIERIITPRLALSASEFLAYQTEKHVLTILTDMTSYADALREVSAAREEVPGRRGYPGYMYTDLSTIYERAGRVEGRNGSITQIPILTMPNDDITHPIPDLTGYITEGQIFVDRQLHNNAIYPPINVLPSLSRLMKSAIGEGMTRNDHGDVSNQLYAMYAIGRDAASMKSVVGEEALSQEDRLALEFLGKFEKTFISQGAYENRTIFETLDLAWSLLRIFPREMLTRIPKKILDQYYSRSSAYTESSKDVIDNTPESS.

Arg-378 is a binding site for ATP. Phosphoserine is present on residues Ser-491, Ser-492, Ser-502, and Ser-503.

Belongs to the ATPase alpha/beta chains family. In terms of assembly, V-ATPase is a heteromultimeric enzyme composed of a peripheral catalytic V1 complex (components A to H) attached to an integral membrane V0 proton pore complex (components: a, c, c', c'', d, e, f and VOA1). Interacts with rav1.

It localises to the vacuole membrane. Its function is as follows. Non-catalytic subunit of the V1 complex of vacuolar(H+)-ATPase (V-ATPase), a multisubunit enzyme composed of a peripheral complex (V1) that hydrolyzes ATP and a membrane integral complex (V0) that translocates protons. V-ATPase is responsible for acidifying and maintaining the pH of intracellular compartments. This is V-type proton ATPase subunit B from Schizosaccharomyces pombe (strain 972 / ATCC 24843) (Fission yeast).